The following is a 202-amino-acid chain: ATP-dependent Clp protease proteolytic subunit (202 aa).

The active-site Nucleophile is the Ser106. His131 is an active-site residue.

Belongs to the peptidase S14 family. Fourteen ClpP subunits assemble into 2 heptameric rings which stack back to back to give a disk-like structure with a central cavity, resembling the structure of eukaryotic proteasomes.

Its subcellular location is the cytoplasm. It catalyses the reaction Hydrolysis of proteins to small peptides in the presence of ATP and magnesium. alpha-casein is the usual test substrate. In the absence of ATP, only oligopeptides shorter than five residues are hydrolyzed (such as succinyl-Leu-Tyr-|-NHMec, and Leu-Tyr-Leu-|-Tyr-Trp, in which cleavage of the -Tyr-|-Leu- and -Tyr-|-Trp bonds also occurs).. In terms of biological role, cleaves peptides in various proteins in a process that requires ATP hydrolysis. Has a chymotrypsin-like activity. Plays a major role in the degradation of misfolded proteins. This chain is ATP-dependent Clp protease proteolytic subunit, found in Acidovorax sp. (strain JS42).